We begin with the raw amino-acid sequence, 347 residues long: Leucine-rich repeat-containing protein 69 (347 aa).

8 LRR repeats span residues 38-60, 61-82, 84-105, 108-129, 131-153, 154-175, 177-199, and 200-222; these read GLKT…CNLT, QLTT…MKYL, SLKN…ACDG, NLIL…VSRL, SLTY…CFLE, NLVE…IKFL, KLQK…CDLK, and KLRI…QDLK.

The protein belongs to the LRRC69 family.

This Homo sapiens (Human) protein is Leucine-rich repeat-containing protein 69 (LRRC69).